A 1189-amino-acid polypeptide reads, in one-letter code: Pyruvate carboxylase (1189 aa).

Residues 21–473 (TMNKILVANR…WTTFIDDTPE (453 aa)) enclose the Biotin carboxylation domain. Positions 139, 223, and 258 each coordinate ATP. The region spanning 143–340 (RNLAYAANVP…IVAAQIQIAA (198 aa)) is the ATP-grasp domain. R315 is a catalytic residue. One can recognise a Pyruvate carboxyltransferase domain in the interval 559-826 (LMIMDTTWRD…ETGIPEANAR (268 aa)). Substrate-binding positions include 567-571 (RDAHQ) and R640. D568 lines the a divalent metal cation pocket. Positions 736, 766, and 768 each coordinate a divalent metal cation. Position 736 is an N6-carboxylysine (K736). T900 provides a ligand contact to substrate. Residues 1099–1174 (KADAHNPNEI…DASDLIPKSS (76 aa)) form the Biotinyl-binding domain. K1140 is modified (N6-biotinyllysine).

Requires biotin as cofactor. Zn(2+) is required as a cofactor.

It is found in the cytoplasm. The enzyme catalyses hydrogencarbonate + pyruvate + ATP = oxaloacetate + ADP + phosphate + H(+). It functions in the pathway carbohydrate biosynthesis; gluconeogenesis. Its function is as follows. Pyruvate carboxylase catalyzes a 2-step reaction, involving the ATP-dependent carboxylation of the covalently attached biotin in the first step and the transfer of the carboxyl group to pyruvate in the second. The polypeptide is Pyruvate carboxylase (PYC1) (Komagataella pastoris (Yeast)).